Here is a 432-residue protein sequence, read N- to C-terminus: 3-phosphoshikimate 1-carboxyvinyltransferase (432 aa).

3-phosphoshikimate contacts are provided by Lys-22, Ser-23, and Arg-27. Lys-22 lines the phosphoenolpyruvate pocket. 2 residues coordinate phosphoenolpyruvate: Gly-96 and Arg-127. Residues Ser-173, Ser-174, Gln-175, Ser-201, Asp-316, Asn-339, and Lys-343 each coordinate 3-phosphoshikimate. A phosphoenolpyruvate-binding site is contributed by Gln-175. Asp-316 acts as the Proton acceptor in catalysis. Arg-347, Arg-391, and Lys-416 together coordinate phosphoenolpyruvate.

It belongs to the EPSP synthase family. As to quaternary structure, monomer.

It is found in the cytoplasm. The catalysed reaction is 3-phosphoshikimate + phosphoenolpyruvate = 5-O-(1-carboxyvinyl)-3-phosphoshikimate + phosphate. Its pathway is metabolic intermediate biosynthesis; chorismate biosynthesis; chorismate from D-erythrose 4-phosphate and phosphoenolpyruvate: step 6/7. Its function is as follows. Catalyzes the transfer of the enolpyruvyl moiety of phosphoenolpyruvate (PEP) to the 5-hydroxyl of shikimate-3-phosphate (S3P) to produce enolpyruvyl shikimate-3-phosphate and inorganic phosphate. The chain is 3-phosphoshikimate 1-carboxyvinyltransferase from Haemophilus influenzae (strain 86-028NP).